The sequence spans 326 residues: Photosystem II assembly factor Ycf39 (326 aa).

Belongs to the NmrA-type oxidoreductase family. Ycf39 subfamily. In terms of assembly, purified in several chlorophyll- and carotenoid-containing complexes, including photosystem II (PSII) assembly intermediate complex RCII* (iD1, D1, D2, PsbE, PsbF, PsbI, Ycf39, Ycf48, HliC and HliD) and the Ycf39-Hlip complex (Ycf39, HliC, HliD and pigments). Tagged protein does not pull down mature PSII.

The protein localises to the cellular thylakoid membrane. Functionally, requires HliD to bind pigments. The Ycf39-Hlip complex binds D1 at an early stage of PSII assembly along with Ycf48, ribosomes and ChlG, the last enzyme in chlorophyll biosynthesis; it may be involved in chlorophyll reuse and delivery to D1 in the initial stages of PSII assembly. The Ycf39-Hlip complex efficiently quenches chlorophyll fluorescence, contributing to photoprotection. In Synechocystis sp. (strain ATCC 27184 / PCC 6803 / Kazusa), this protein is Photosystem II assembly factor Ycf39.